A 435-amino-acid chain; its full sequence is Elongation factor 1-alpha (435 aa).

A tr-type G domain is found at 4 to 229; that stretch reads KPHLNLIVIG…DQLEIPPKPV (226 aa). The tract at residues 13-20 is G1; sequence GHVDHGKS. 13 to 20 lines the GTP pocket; that stretch reads GHVDHGKS. Serine 20 lines the Mg(2+) pocket. Residues 69-73 are G2; that stretch reads GVTIN. Residues 90 to 93 are G3; that stretch reads DAPG. Residues 90–94 and 152–155 each bind GTP; these read DAPGH and NKMD. The interval 152–155 is G4; it reads NKMD. The interval 193–195 is G5; sequence VAP.

The protein belongs to the TRAFAC class translation factor GTPase superfamily. Classic translation factor GTPase family. EF-Tu/EF-1A subfamily.

It is found in the cytoplasm. The enzyme catalyses GTP + H2O = GDP + phosphate + H(+). GTP hydrolase that promotes the GTP-dependent binding of aminoacyl-tRNA to the A-site of ribosomes during protein biosynthesis. The polypeptide is Elongation factor 1-alpha (Sulfolobus acidocaldarius (strain ATCC 33909 / DSM 639 / JCM 8929 / NBRC 15157 / NCIMB 11770)).